Consider the following 427-residue polypeptide: Stemphyloxin II biosynthesis cluster transcription factor sthR (427 aa).

The segment at residues 15-45 (CDRCRKQKLRCPPDKDDMGTCGRCLRAGVAC) is a DNA-binding region (zn(2)-C6 fungal-type). The tract at residues 51-70 (KPRGRSQKHGISTDGTSHVS) is disordered. Residues 59–69 (HGISTDGTSHV) show a composition bias toward polar residues.

The protein resides in the nucleus. Functionally, transcription factor that regulates the expression of the gene cluster that mediates the biosynthesis of the phytotoxin stemphyloxin II. This chain is Stemphyloxin II biosynthesis cluster transcription factor sthR, found in Phaeosphaeria nodorum (strain SN15 / ATCC MYA-4574 / FGSC 10173) (Glume blotch fungus).